We begin with the raw amino-acid sequence, 413 residues long: Hemocyanin type 2 unit e (413 aa).

A glycan (N-linked (GlcNAc...) (high mannose) asparagine) is linked at Asn17. A Cu cation-binding site is contributed by His49. Cysteines 55 and 66 form a disulfide. The segment at residues Cys67–His69 is a cross-link (2'-(S-cysteinyl)-histidine (Cys-His)). The Cu cation site is built by His69 and His78. N-linked (GlcNAc...) (high mannose) asparagine glycosylation is present at Asn127. Disulfide bonds link Cys179-Cys246 and Cys336-Cys342. Residues His189, His193, and His220 each contribute to the Cu cation site.

It belongs to the tyrosinase family. Hemocyanin subfamily. Decamers of large identical subunits, each containing 8 globular oxygen-binding functional units. Cu(2+) is required as a cofactor. As to expression, hemolymph.

The protein localises to the secreted. It is found in the extracellular space. Functionally, hemocyanins are copper-containing oxygen carriers occurring freely dissolved in the hemolymph of many mollusks and arthropods. In Rapana venosa (Veined rapa whelk), this protein is Hemocyanin type 2 unit e.